A 140-amino-acid chain; its full sequence is Lymphocyte antigen 6L (140 aa).

The first 20 residues, 1–20 (MAPLLLVLWASLVSMELTGG), serve as a signal peptide directing secretion. A UPAR/Ly6 domain is found at 31–124 (LSCFECFKVL…GSWEGFWSLP (94 aa)). Intrachain disulfides connect Cys-33–Cys-50 and Cys-105–Cys-110. Ser-116 carries the GPI-anchor amidated serine lipid modification. The propeptide at 117–140 (WEGFWSLPGRLLLPMGLGLFCTLL) is removed in mature form.

It is found in the cell membrane. This is Lymphocyte antigen 6L from Mus musculus (Mouse).